Reading from the N-terminus, the 75-residue chain is Large ribosomal subunit protein bL28 (75 aa).

This sequence belongs to the bacterial ribosomal protein bL28 family.

This chain is Large ribosomal subunit protein bL28, found in Buchnera aphidicola subsp. Acyrthosiphon pisum (strain APS) (Acyrthosiphon pisum symbiotic bacterium).